The sequence spans 233 residues: Phosphoglycolate phosphatase (233 aa).

D9 acts as the Nucleophile in catalysis. Mg(2+) is bound by residues D9 and D11. K154 provides a ligand contact to substrate. Mg(2+) is bound by residues D177 and D181.

The protein belongs to the archaeal SPP-like hydrolase family. It depends on Mg(2+) as a cofactor.

The catalysed reaction is 2-phosphoglycolate + H2O = glycolate + phosphate. In terms of biological role, catalyzes the dephosphorylation of 2-phosphoglycolate. This is Phosphoglycolate phosphatase from Pyrococcus abyssi (strain GE5 / Orsay).